The sequence spans 317 residues: Ribosomal protein L11 methyltransferase (317 aa).

Residues Thr158, Gly179, Asp201, and Asn244 each contribute to the S-adenosyl-L-methionine site.

Belongs to the methyltransferase superfamily. PrmA family.

It localises to the cytoplasm. The enzyme catalyses L-lysyl-[protein] + 3 S-adenosyl-L-methionine = N(6),N(6),N(6)-trimethyl-L-lysyl-[protein] + 3 S-adenosyl-L-homocysteine + 3 H(+). In terms of biological role, methylates ribosomal protein L11. In Streptococcus agalactiae serotype III (strain NEM316), this protein is Ribosomal protein L11 methyltransferase.